Here is a 262-residue protein sequence, read N- to C-terminus: Ribose-5-phosphate isomerase A (262 aa).

Substrate-binding positions include 33 to 36, 89 to 92, and 102 to 105; these read TGST, DGAD, and KGGG. Glu-111 serves as the catalytic Proton acceptor. Lys-129 is a substrate binding site.

Belongs to the ribose 5-phosphate isomerase family. In terms of assembly, homodimer.

It catalyses the reaction aldehydo-D-ribose 5-phosphate = D-ribulose 5-phosphate. The protein operates within carbohydrate degradation; pentose phosphate pathway; D-ribose 5-phosphate from D-ribulose 5-phosphate (non-oxidative stage): step 1/1. In terms of biological role, catalyzes the reversible conversion of ribose-5-phosphate to ribulose 5-phosphate. The sequence is that of Ribose-5-phosphate isomerase A from Ruegeria sp. (strain TM1040) (Silicibacter sp.).